A 231-amino-acid polypeptide reads, in one-letter code: Large ribosomal subunit protein uL1 (231 aa).

This sequence belongs to the universal ribosomal protein uL1 family. As to quaternary structure, part of the 50S ribosomal subunit.

In terms of biological role, binds directly to 23S rRNA. The L1 stalk is quite mobile in the ribosome, and is involved in E site tRNA release. Protein L1 is also a translational repressor protein, it controls the translation of the L11 operon by binding to its mRNA. This is Large ribosomal subunit protein uL1 from Buchnera aphidicola subsp. Acyrthosiphon pisum (strain APS) (Acyrthosiphon pisum symbiotic bacterium).